Reading from the N-terminus, the 188-residue chain is MDIDPYKEFGSSYQLLNFLPLDFFPDLNALVDTATALYEEELTGREHCSPHHTAIRQALVCWDELTKLIAWMSSNITSEQVRTIIVNHVNDTWGLKVRQSLWFHLSCLTFGQHTVQEFLVSFGVWIRTPAPYRPPNAPILSTLPEHTVIRRRGGARASRSPRRRTPSPRRRRSQSPRRRRSQSPSANC.

Over residues 150-181 (RRRGGARASRSPRRRTPSPRRRRSQSPRRRRS) the composition is skewed to basic residues. A disordered region spans residues 150-188 (RRRGGARASRSPRRRTPSPRRRRSQSPRRRRSQSPSANC). Residues Ser160, Ser167, and Ser175 each carry the phosphoserine; by host modification. The stretch at 160–166 (SPRRRTP) is one 1; half-length repeat. The interval 160–182 (SPRRRTPSPRRRRSQSPRRRRSQ) is 3 X 8 AA repeats of S-P-R-R-R-[PR]-S-Q. Residues 163-180 (RRTPSPRRRRSQSPRRRR) carry the Bipartite nuclear localization signal motif. 2 consecutive repeat copies span residues 167 to 174 (SPRRRRSQ) and 175 to 182 (SPRRRRSQ). The tract at residues 182 to 188 (QSPSANC) is RNA binding.

The protein belongs to the orthohepadnavirus core antigen family. Homodimerizes, then multimerizes. Interacts with cytosol exposed regions of viral L glycoprotein present in the reticulum-to-Golgi compartment. Interacts with human FLNB. Phosphorylated form interacts with host importin alpha; this interaction depends on the exposure of the NLS, which itself depends upon genome maturation and/or phosphorylation of the capsid protein. Interacts with host NUP153. In terms of processing, phosphorylated by host SRPK1, SRPK2, and maybe protein kinase C or GAPDH. Phosphorylation is critical for pregenomic RNA packaging. Protein kinase C phosphorylation is stimulated by HBx protein and may play a role in transport of the viral genome to the nucleus at the late step during the viral replication cycle.

Its subcellular location is the virion. It is found in the host cytoplasm. Its function is as follows. Self assembles to form an icosahedral capsid. Most capsids appear to be large particles with an icosahedral symmetry of T=4 and consist of 240 copies of capsid protein, though a fraction forms smaller T=3 particles consisting of 180 capsid proteins. Entering capsids are transported along microtubules to the nucleus. Phosphorylation of the capsid is thought to induce exposure of nuclear localization signal in the C-terminal portion of the capsid protein that allows binding to the nuclear pore complex via the importin (karyopherin-) alpha and beta. Capsids are imported in intact form through the nuclear pore into the nuclear basket, where it probably binds NUP153. Only capsids that contain the mature viral genome can release the viral DNA and capsid protein into the nucleoplasm. Immature capsids get stuck in the basket. Capsids encapsulate the pre-genomic RNA and the P protein. Pre-genomic RNA is reverse-transcribed into DNA while the capsid is still in the cytoplasm. The capsid can then either be directed to the nucleus, providing more genomes for transcription, or bud through the endoplasmic reticulum to provide new virions. The chain is Capsid protein from Marmota monax (Woodchuck).